Here is a 164-residue protein sequence, read N- to C-terminus: Osteocalcin 2b (164 aa).

The first 18 residues, methionine 1–serine 18, serve as a signal peptide directing secretion. A propeptide spanning residues methionine 19–arginine 115 is cleaved from the precursor. A compositionally biased stretch (low complexity) spans proline 30–alanine 95. A disordered region spans residues proline 30–glutamate 99. Positions glutamine 128–glycine 160 constitute a Gla domain. Ca(2+) contacts are provided by glutamate 130, glutamate 134, and glutamate 137. A 4-carboxyglutamate mark is found at glutamate 130, glutamate 134, and glutamate 137. An intrachain disulfide couples cysteine 136 to cysteine 142.

This sequence belongs to the osteocalcin/matrix Gla protein family. Post-translationally, gamma-carboxyglutamate residues are formed by vitamin K dependent carboxylation. These residues are essential for the binding of calcium.

The protein resides in the secreted. Binds strongly to apatite and calcium. The chain is Osteocalcin 2b from Oncorhynchus mykiss (Rainbow trout).